We begin with the raw amino-acid sequence, 379 residues long: UDP-4-amino-4-deoxy-L-arabinose--oxoglutarate aminotransferase (379 aa).

K182 bears the N6-(pyridoxal phosphate)lysine mark.

This sequence belongs to the DegT/DnrJ/EryC1 family. ArnB subfamily. Homodimer. Pyridoxal 5'-phosphate is required as a cofactor.

It catalyses the reaction UDP-4-amino-4-deoxy-beta-L-arabinose + 2-oxoglutarate = UDP-beta-L-threo-pentopyranos-4-ulose + L-glutamate. It functions in the pathway nucleotide-sugar biosynthesis; UDP-4-deoxy-4-formamido-beta-L-arabinose biosynthesis; UDP-4-deoxy-4-formamido-beta-L-arabinose from UDP-alpha-D-glucuronate: step 2/3. Its pathway is bacterial outer membrane biogenesis; lipopolysaccharide biosynthesis. Catalyzes the conversion of UDP-4-keto-arabinose (UDP-Ara4O) to UDP-4-amino-4-deoxy-L-arabinose (UDP-L-Ara4N). The modified arabinose is attached to lipid A and is required for resistance to polymyxin and cationic antimicrobial peptides. The sequence is that of UDP-4-amino-4-deoxy-L-arabinose--oxoglutarate aminotransferase from Escherichia coli O81 (strain ED1a).